The chain runs to 464 residues: tRNA modification GTPase MnmE (464 aa).

Positions 25, 87, and 130 each coordinate (6S)-5-formyl-5,6,7,8-tetrahydrofolate. The TrmE-type G domain maps to 226 to 386; sequence GLSVVLAGQP…LRAELLRIAG (161 aa). Residue N236 participates in K(+) binding. GTP contacts are provided by residues 236–241, 255–261, and 280–283; these read NVGKSS, TPIAGTT, and DTAG. Residue S240 coordinates Mg(2+). Residues T255, I257, and T260 each coordinate K(+). T261 serves as a coordination point for Mg(2+). K464 serves as a coordination point for (6S)-5-formyl-5,6,7,8-tetrahydrofolate.

Belongs to the TRAFAC class TrmE-Era-EngA-EngB-Septin-like GTPase superfamily. TrmE GTPase family. Homodimer. Heterotetramer of two MnmE and two MnmG subunits. Requires K(+) as cofactor.

The protein localises to the cytoplasm. Its function is as follows. Exhibits a very high intrinsic GTPase hydrolysis rate. Involved in the addition of a carboxymethylaminomethyl (cmnm) group at the wobble position (U34) of certain tRNAs, forming tRNA-cmnm(5)s(2)U34. The polypeptide is tRNA modification GTPase MnmE (Burkholderia ambifaria (strain ATCC BAA-244 / DSM 16087 / CCUG 44356 / LMG 19182 / AMMD) (Burkholderia cepacia (strain AMMD))).